The primary structure comprises 298 residues: CCR4-NOT transcription complex subunit 9 (298 aa).

The protein belongs to the CNOT9 family. In terms of assembly, homodimer. Component of the CCR4-NOT complex.

It is found in the nucleus. Its subcellular location is the cytoplasm. The protein localises to the P-body. Functionally, component of the CCR4-NOT complex which is one of the major cellular mRNA deadenylases and is linked to various cellular processes including bulk mRNA degradation, miRNA-mediated repression, translational repression during translational initiation and general transcription regulation. Additional complex functions may be a consequence of its influence on mRNA expression. Involved in down-regulation of MYB- and JUN-dependent transcription. Enhances ligand-dependent transcriptional activity of nuclear hormone receptors. May play a role in cell differentiation. This chain is CCR4-NOT transcription complex subunit 9, found in Danio rerio (Zebrafish).